A 250-amino-acid chain; its full sequence is 1-(5-phosphoribosyl)-5-[(5-phosphoribosylamino)methylideneamino] imidazole-4-carboxamide isomerase (250 aa).

Catalysis depends on D8, which acts as the Proton acceptor. D131 acts as the Proton donor in catalysis.

Belongs to the HisA/HisF family.

It is found in the cytoplasm. It catalyses the reaction 1-(5-phospho-beta-D-ribosyl)-5-[(5-phospho-beta-D-ribosylamino)methylideneamino]imidazole-4-carboxamide = 5-[(5-phospho-1-deoxy-D-ribulos-1-ylimino)methylamino]-1-(5-phospho-beta-D-ribosyl)imidazole-4-carboxamide. The protein operates within amino-acid biosynthesis; L-histidine biosynthesis; L-histidine from 5-phospho-alpha-D-ribose 1-diphosphate: step 4/9. This Paraburkholderia xenovorans (strain LB400) protein is 1-(5-phosphoribosyl)-5-[(5-phosphoribosylamino)methylideneamino] imidazole-4-carboxamide isomerase.